Consider the following 147-residue polypeptide: Diaminohydroxyphosphoribosylamino-pyrimidine deaminase (147 aa).

Positions 1-123 (MNDIFYMKRA…YLKKHGICVK (123 aa)) constitute a CMP/dCMP-type deaminase domain. Zn(2+) is bound at residue H50. E52 functions as the Proton donor in the catalytic mechanism. 2 residues coordinate Zn(2+): C75 and C84.

The protein belongs to the cytidine and deoxycytidylate deaminase family. Requires Zn(2+) as cofactor.

The catalysed reaction is 2,5-diamino-6-hydroxy-4-(5-phosphoribosylamino)-pyrimidine + H2O + H(+) = 5-amino-6-(5-phospho-D-ribosylamino)uracil + NH4(+). The protein operates within cofactor biosynthesis; riboflavin biosynthesis; 5-amino-6-(D-ribitylamino)uracil from GTP: step 2/4. This chain is Diaminohydroxyphosphoribosylamino-pyrimidine deaminase (ribD1), found in Buchnera aphidicola subsp. Acyrthosiphon pisum (strain APS) (Acyrthosiphon pisum symbiotic bacterium).